The sequence spans 279 residues: DegV domain-containing protein SACOL1460 (279 aa).

Residues 4–278 enclose the DegV domain; that stretch reads QIIVTDSTSD…QGAIGLVVLK (275 aa). Residues T61 and S93 each coordinate hexadecanoate.

Its function is as follows. May bind long-chain fatty acids, such as palmitate, and may play a role in lipid transport or fatty acid metabolism. This Staphylococcus aureus (strain COL) protein is DegV domain-containing protein SACOL1460.